Consider the following 546-residue polypeptide: MLRSTISLLMNSAAQKTMTNSNFVLNAPKITLTKVEQNICNLLNDYTDLYNQKYHNKPEPLTLRITGGWVRDKLLGQGSHDLDIAINVMSGEQFATGLNEYLQQHYAKYGAKPHNIHKIDKNPEKSKHLETATTKLFGVEVDFVNLRSEKYTELSRIPKVCFGTPEEDALRRDATLNALFYNIHKGEVEDFTKRGLQDLKDGVLRTPLPAKQTFLDDPLRVLRLIRFASRFNFTIDPEVMAEMGDPQINVAFNSKISRERVGVEMEKILVGPTPLLALQLIQRAHLENVIFFWHNDSSVVKFNEENCQDMDKINHVYNDNILNSHLKSFIELYPMFLEKLPILREKIGRSPGFQQNFILSAILSPMANLQIIGNPKKKINNLVSVTESIVKEGLKLSKNDAAVIAKTVDSICSYEEILAKFADRSQLKKSEIGIFLRNFNGEWETAHFASLSDAFLKIPKLETKKIELLFQNYNEFYSYIFDNNLNNCHELKPIVDGKQMAKLLQMKPGPWLGKINNEAIRWQFDNPTGTDQELITHLKAILPKYL.

It belongs to the tRNA nucleotidyltransferase/poly(A) polymerase family.

It is found in the mitochondrion. The protein resides in the cytoplasm. It localises to the nucleus. It catalyses the reaction a tRNA precursor + 2 CTP + ATP = a tRNA with a 3' CCA end + 3 diphosphate. Nucleotidyltransferase that catalyzes the addition and repair of the essential 3'-terminal CCA sequence in tRNAs, which is necessary for the attachment of amino acids to the 3' terminus of tRNA molecules, using CTP and ATP as substrates. tRNA 3'-terminal CCA addition is required both for tRNA processing and repair. Also involved in tRNA surveillance by mediating tandem CCA addition to generate a CCACCA at the 3' terminus of unstable tRNAs. While stable tRNAs receive only 3'-terminal CCA, unstable tRNAs are marked with CCACCA and rapidly degraded. The structural flexibility of RNA controls the choice between CCA versus CCACCA addition: following the first CCA addition cycle, nucleotide-binding to the active site triggers a clockwise screw motion, producing torque on the RNA. This ejects stable RNAs, whereas unstable RNAs are refolded while bound to the enzyme and subjected to a second CCA catalytic cycle. This chain is CCA tRNA nucleotidyltransferase, mitochondrial (CCA1), found in Saccharomyces cerevisiae (strain ATCC 204508 / S288c) (Baker's yeast).